Consider the following 320-residue polypeptide: Methionyl-tRNA formyltransferase (320 aa).

111 to 114 (SLLP) provides a ligand contact to (6S)-5,6,7,8-tetrahydrofolate.

Belongs to the Fmt family.

It catalyses the reaction L-methionyl-tRNA(fMet) + (6R)-10-formyltetrahydrofolate = N-formyl-L-methionyl-tRNA(fMet) + (6S)-5,6,7,8-tetrahydrofolate + H(+). Its function is as follows. Attaches a formyl group to the free amino group of methionyl-tRNA(fMet). The formyl group appears to play a dual role in the initiator identity of N-formylmethionyl-tRNA by promoting its recognition by IF2 and preventing the misappropriation of this tRNA by the elongation apparatus. This chain is Methionyl-tRNA formyltransferase, found in Bifidobacterium adolescentis (strain ATCC 15703 / DSM 20083 / NCTC 11814 / E194a).